Consider the following 253-residue polypeptide: L-cysteine S-thiosulfotransferase subunit SoxA (253 aa).

An N-terminal signal peptide occupies residues 1-17 (MGKWVTIIFVLFLYAIA). In terms of domain architecture, Cytochrome c spans 44-129 (VYAEQGRDMF…SIATYVATLS (86 aa)). Positions 64, 67, 68, 102, 165, 168, and 169 each coordinate heme c. A substrate-binding site is contributed by R210. C214 contacts heme c. C214 functions as the Cysteine persulfide intermediate in the catalytic mechanism.

It belongs to the SoxA family. Heterodimer of SoxA and SoxX. Heme c serves as cofactor. Post-translationally, cysteine persulfide at Cys-214.

The protein resides in the periplasm. The enzyme catalyses L-cysteinyl-[SoxY protein] + thiosulfate + 2 Fe(III)-[cytochrome c] = S-sulfosulfanyl-L-cysteinyl-[SoxY protein] + 2 Fe(II)-[cytochrome c] + 2 H(+). It catalyses the reaction S-sulfanyl-L-cysteinyl-[SoxY protein] + thiosulfate + 2 Fe(III)-[cytochrome c] = S-(2-sulfodisulfanyl)-L-cysteinyl-[SoxY protein] + 2 Fe(II)-[cytochrome c] + 2 H(+). In terms of biological role, C-type diheme cytochrome, which is part of the SoxAX cytochrome complex involved in sulfur oxidation. The SoxAX complex catalyzes the formation of a heterodisulfide bond between the conserved cysteine residue on a sulfur carrier SoxYZ complex subunit SoxY and thiosulfate or other inorganic sulfur substrates. This leads to the liberation of two electrons, which may be transferred from the SoxAX complex to another cytochrome c that then channels them into the respiratory electron transport chain. Some electrons may be used for reductive CO(2) fixation. In Hydrogenobacter thermophilus (strain DSM 6534 / IAM 12695 / TK-6), this protein is L-cysteine S-thiosulfotransferase subunit SoxA.